The chain runs to 415 residues: Serine hydroxymethyltransferase 1 (415 aa).

(6S)-5,6,7,8-tetrahydrofolate is bound by residues Leu122 and 126–128 (GHL). Position 230 is an N6-(pyridoxal phosphate)lysine (Lys230).

The protein belongs to the SHMT family. In terms of assembly, homodimer. The cofactor is pyridoxal 5'-phosphate.

The protein resides in the cytoplasm. The catalysed reaction is (6R)-5,10-methylene-5,6,7,8-tetrahydrofolate + glycine + H2O = (6S)-5,6,7,8-tetrahydrofolate + L-serine. Its pathway is one-carbon metabolism; tetrahydrofolate interconversion. It functions in the pathway amino-acid biosynthesis; glycine biosynthesis; glycine from L-serine: step 1/1. Catalyzes the reversible interconversion of serine and glycine with tetrahydrofolate (THF) serving as the one-carbon carrier. This reaction serves as the major source of one-carbon groups required for the biosynthesis of purines, thymidylate, methionine, and other important biomolecules. Also exhibits THF-independent aldolase activity toward beta-hydroxyamino acids, producing glycine and aldehydes, via a retro-aldol mechanism. The sequence is that of Serine hydroxymethyltransferase 1 from Burkholderia mallei (strain ATCC 23344).